Reading from the N-terminus, the 374-residue chain is Ribosomal RNA large subunit methyltransferase G (374 aa).

It belongs to the methyltransferase superfamily. RlmG family.

Its subcellular location is the cytoplasm. It carries out the reaction guanosine(1835) in 23S rRNA + S-adenosyl-L-methionine = N(2)-methylguanosine(1835) in 23S rRNA + S-adenosyl-L-homocysteine + H(+). Its function is as follows. Specifically methylates the guanine in position 1835 (m2G1835) of 23S rRNA. The polypeptide is Ribosomal RNA large subunit methyltransferase G (Pseudomonas fluorescens (strain Pf0-1)).